An 86-amino-acid polypeptide reads, in one-letter code: Putative regulatory protein Dvul_2085 (86 aa).

This sequence belongs to the RemA family.

This Nitratidesulfovibrio vulgaris (strain DP4) (Desulfovibrio vulgaris) protein is Putative regulatory protein Dvul_2085.